The primary structure comprises 226 residues: V-type proton ATPase subunit E (226 aa).

The protein belongs to the V-ATPase E subunit family. As to quaternary structure, V-ATPase is a heteromultimeric enzyme made up of two complexes: the ATP-hydrolytic V1 complex and the proton translocation V0 complex. The V1 complex consists of three catalytic AB heterodimers that form a heterohexamer, three peripheral stalks each consisting of EG heterodimers, one central rotor including subunits D and F, and the regulatory subunits C and H. The proton translocation complex V0 consists of the proton transport subunit a, a ring of proteolipid subunits c9c'', rotary subunit d, subunits e and f, and the accessory subunits vah-19/Ac45 and vah-20/PRR. In terms of tissue distribution, expressed in the excretory cell and syncytial hypodermal cells (at protein level). Expressed in the intestine (at protein level).

Its subcellular location is the cytoplasm. The protein resides in the apical cell membrane. Its function is as follows. Subunit of the V1 complex of vacuolar(H+)-ATPase (V-ATPase), a multisubunit enzyme composed of a peripheral complex (V1) that hydrolyzes ATP and a membrane integral complex (V0) that translocates protons. V-ATPase is responsible for acidifying and maintaining the pH of intracellular compartments and in some cell types, is targeted to the plasma membrane, where it is responsible for acidifying the extracellular environment. Regulates pH homeostasis in the intestine. Probably by regulating cytoplasmic pH, required for cell survival in the intestine and hypodermis. Involved in receptor-mediated endocytosis. Involved in embryogenesis and larval development. The protein is V-type proton ATPase subunit E of Caenorhabditis elegans.